We begin with the raw amino-acid sequence, 232 residues long: Orotate phosphoribosyltransferase (232 aa).

5-phospho-alpha-D-ribose 1-diphosphate-binding positions include arginine 107, lysine 108, lysine 111, histidine 113, and 133-141 (EDLTTAGGS). Threonine 137 provides a ligand contact to orotate.

It belongs to the purine/pyrimidine phosphoribosyltransferase family. PyrE subfamily. Homodimer. Mg(2+) serves as cofactor.

It catalyses the reaction orotidine 5'-phosphate + diphosphate = orotate + 5-phospho-alpha-D-ribose 1-diphosphate. The protein operates within pyrimidine metabolism; UMP biosynthesis via de novo pathway; UMP from orotate: step 1/2. Catalyzes the transfer of a ribosyl phosphate group from 5-phosphoribose 1-diphosphate to orotate, leading to the formation of orotidine monophosphate (OMP). The sequence is that of Orotate phosphoribosyltransferase from Agrobacterium fabrum (strain C58 / ATCC 33970) (Agrobacterium tumefaciens (strain C58)).